The chain runs to 299 residues: MKKLGTDLLKRGFAKMVKHGVVMDVTNVEQAKIAEEAGAAAVMALERVPADIRVQGGVARMSDPDMILEIKDAVSIPVMAKARIGHFVEAQVLESIGVDMIDESEVLTPADEINHINKKAFTAPFVCGARNLGEALRRIDEGAAMIRTKGEAGTGNVVEAVKHMRAVNEGIARVVGYHEMGLEAELVQMARNELKVPMEIILEVAKLKRLPVVNFAAGGIATPADAALMMQMGCDGVFVGSGIFKSGNPEIRAKAIVEATYNFDKPELIGEVSKNLGEAMVGINIDQIPEEMLLAKRGI.

Residue aspartate 24 participates in D-ribose 5-phosphate binding. The active-site Schiff-base intermediate with D-ribose 5-phosphate is lysine 81. Glycine 153 provides a ligand contact to D-ribose 5-phosphate. Residue arginine 165 participates in D-glyceraldehyde 3-phosphate binding. D-ribose 5-phosphate is bound by residues glycine 219 and 240-241 (GS).

The protein belongs to the PdxS/SNZ family. In the presence of PdxT, forms a dodecamer of heterodimers.

It carries out the reaction aldehydo-D-ribose 5-phosphate + D-glyceraldehyde 3-phosphate + L-glutamine = pyridoxal 5'-phosphate + L-glutamate + phosphate + 3 H2O + H(+). It functions in the pathway cofactor biosynthesis; pyridoxal 5'-phosphate biosynthesis. In terms of biological role, catalyzes the formation of pyridoxal 5'-phosphate from ribose 5-phosphate (RBP), glyceraldehyde 3-phosphate (G3P) and ammonia. The ammonia is provided by the PdxT subunit. Can also use ribulose 5-phosphate and dihydroxyacetone phosphate as substrates, resulting from enzyme-catalyzed isomerization of RBP and G3P, respectively. The chain is Pyridoxal 5'-phosphate synthase subunit PdxS from Methanococcus vannielii (strain ATCC 35089 / DSM 1224 / JCM 13029 / OCM 148 / SB).